The sequence spans 293 residues: Elongation factor Ts (293 aa).

The segment at 80-83 is involved in Mg(2+) ion dislocation from EF-Tu; the sequence is TDFV.

It belongs to the EF-Ts family.

The protein resides in the cytoplasm. In terms of biological role, associates with the EF-Tu.GDP complex and induces the exchange of GDP to GTP. It remains bound to the aminoacyl-tRNA.EF-Tu.GTP complex up to the GTP hydrolysis stage on the ribosome. The protein is Elongation factor Ts of Aeromonas hydrophila subsp. hydrophila (strain ATCC 7966 / DSM 30187 / BCRC 13018 / CCUG 14551 / JCM 1027 / KCTC 2358 / NCIMB 9240 / NCTC 8049).